Consider the following 350-residue polypeptide: Protein YIPF3 (350 aa).

A compositionally biased stretch (low complexity) spans 1 to 10; the sequence is MATTAAPAGG. The tract at residues 1–51 is disordered; sequence MATTAAPAGGARNGAGPEWGGFEENIQGGGSAVIDMENMDDTSGSSFEDMG. Residue Ala-2 is modified to N-acetylalanine. Residues 2–148 lie on the Cytoplasmic side of the membrane; it reads ATTAAPAGGA…PIKMVNFPQK (147 aa). A helical membrane pass occupies residues 149–169; sequence IAGELYGPLMLVFTLVAILLH. The Lumenal segment spans residues 170-187; it reads GMKTSDTIIREGTLMGTA. The chain crosses the membrane as a helical span at residues 188–208; sequence IGTCFGYWLGVSSFIYFLAYL. The Cytoplasmic portion of the chain corresponds to 209 to 214; that stretch reads CNAQIT. A helical membrane pass occupies residues 215–237; the sequence is MLQMLALLGYGLFGHCIVLFITY. Topologically, residues 238–240 are lumenal; sequence NIH. The chain crosses the membrane as a helical span at residues 241-263; sequence LHALFYLFWLLVGGLSTLRMVAV. Residues 264 to 274 are Cytoplasmic-facing; sequence LVSRTVGPTQR. The helical transmembrane segment at 275-295 threads the bilayer; that stretch reads LLLCGTLAALHMLFLLYLHFA. At 296–350 the chain is on the lumenal side; the sequence is YHKVVEGILDTLEGPNIPPIQRVPRDIPAMLPAARLPTTVLNATAKAVAVTLQSH. Residues Thr-333 and Thr-334 are each glycosylated (O-linked (GalNAc...) threonine). Asn-337 carries an N-linked (GlcNAc...) asparagine glycan. 2 O-linked (GalNAc...) threonine glycosylation sites follow: Thr-339 and Thr-346.

It belongs to the YIP1 family. As to quaternary structure, interacts with YIPF4 and YIPF5. In terms of processing, N-glycosylated in the ER (40 kDa form I), then O-glycosylated in the Golgi apparatus (46 kDa form II), the C-terminal lumenal region is later removed in the Golgi apparatus to produce a 36 kDa form III. O-glycosylated with core 1-like and core 2-like glycans. O-glycan heterogeneity at Thr-346: HexNAc (minor), HexHexNAc (major), Hex1HexNAc2 (minor), Hex2HexNAc2 (minor) and dHex1Hex2HexNAc2 (minor). As to expression, expressed by nucleated hematopoietic cells (at protein level).

It localises to the cell membrane. The protein resides in the cytoplasm. Its subcellular location is the golgi apparatus. The protein localises to the cis-Golgi network membrane. In terms of biological role, involved in the maintenance of the Golgi structure. May play a role in hematopoiesis. In Homo sapiens (Human), this protein is Protein YIPF3 (YIPF3).